The following is a 326-amino-acid chain: Tumor necrosis factor soluble receptor (326 aa).

Residues 1–16 (MFRLTLLLAYVACVYG) form the signal peptide. 4 TNFR-Cys repeats span residues 27–62 (KCRG…TVCS), 63–104 (PCKN…DRVC), 105–147 (DCSA…VLCT), and 148–186 (KCPR…TSCT). Cystine bridges form between Cys28–Cys39, Cys40–Cys53, Cys43–Cys61, Cys64–Cys79, Cys82–Cys96, Cys86–Cys104, Cys106–Cys120, Cys123–Cys146, Cys129–Cys149, and Cys164–Cys185. An N-linked (GlcNAc...) asparagine; by host glycan is attached at Asn66. Asn181, Asn205, and Asn238 each carry an N-linked (GlcNAc...) asparagine; by host glycan.

In terms of biological role, binds to TNF-alpha and beta. Probably prevents TNF to reach cellular target and thereby deampening the potential antiviral effects of the cytokine. The chain is Tumor necrosis factor soluble receptor from Oryctolagus cuniculus (Rabbit).